Reading from the N-terminus, the 515-residue chain is Leucine-rich repeat transmembrane neuronal protein 2 (515 aa).

The first 33 residues, 1-33 (MGLHFKWPLGAPMLAAIYAMSVVLKMLPALGMA), serve as a signal peptide directing secretion. At 34–421 (CPPKCRCEKL…EPDNAIFTQR (388 aa)) the chain is on the extracellular side. Residue Asn57 is glycosylated (N-linked (GlcNAc...) asparagine). 10 LRR repeats span residues 61-83 (KGSL…QFAS), 84-107 (FSQL…AFQG), 109-131 (YKLK…TFTQ), 132-155 (LINL…LFYG), 156-179 (LRKL…LFWD), 181-203 (RSLE…GFAG), 205-227 (IKLR…HFLR), 229-251 (SSLH…MEWT), 252-275 (WSTL…VFET), and 276-299 (MPNL…ILSS). A glycan (N-linked (GlcNAc...) asparagine) is linked at Asn126. The N-linked (GlcNAc...) asparagine glycan is linked to Asn243. N-linked (GlcNAc...) asparagine glycosylation occurs at Asn362. A helical transmembrane segment spans residues 422-442 (VITGTMALLFSFFFIIFIVFI). The Cytoplasmic segment spans residues 443–515 (SRKCCPPTLR…QQLPYKECEV (73 aa)). Positions 512 to 515 (ECEV) match the Involved in DLG4-binding motif.

It belongs to the LRRTM family. As to quaternary structure, interacts with DLG4. Interacts with neurexin NRXN1; interaction is mediated by heparan sulfate glycan modification on neurexin. Expressed in neuronal tissues. Widely distributed in neuropil regions in discrete puncta throughout the brain (at protein level). Detected in cortex, thalamus, striatum, olfactory bulb, cerebellum and all hippocampal subfields (at protein level). More abundant in deep than in superficial layers of neocortex (at protein level).

Its subcellular location is the cell membrane. The protein resides in the postsynaptic cell membrane. Involved in the development and maintenance of excitatory synapses in the nervous system. Regulates surface expression of AMPA receptors and instructs the development of functional glutamate release sites. Acts as a ligand for the presynaptic receptors NRXN1-A and NRXN1-B. This chain is Leucine-rich repeat transmembrane neuronal protein 2 (Lrrtm2), found in Rattus norvegicus (Rat).